Reading from the N-terminus, the 250-residue chain is 5'-nucleotidase SurE (250 aa).

A divalent metal cation-binding residues include Asp8, Asp9, Ser39, and Asn91.

Belongs to the SurE nucleotidase family. A divalent metal cation is required as a cofactor.

It localises to the cytoplasm. The enzyme catalyses a ribonucleoside 5'-phosphate + H2O = a ribonucleoside + phosphate. Its function is as follows. Nucleotidase that shows phosphatase activity on nucleoside 5'-monophosphates. The protein is 5'-nucleotidase SurE of Leptospira borgpetersenii serovar Hardjo-bovis (strain JB197).